A 179-amino-acid polypeptide reads, in one-letter code: ATP synthase subunit delta 2 (179 aa).

Belongs to the ATPase delta chain family. F-type ATPases have 2 components, F(1) - the catalytic core - and F(0) - the membrane proton channel. F(1) has five subunits: alpha(3), beta(3), gamma(1), delta(1), epsilon(1). F(0) has three main subunits: a(1), b(2) and c(10-14). The alpha and beta chains form an alternating ring which encloses part of the gamma chain. F(1) is attached to F(0) by a central stalk formed by the gamma and epsilon chains, while a peripheral stalk is formed by the delta and b chains.

The protein localises to the cell inner membrane. F(1)F(0) ATP synthase produces ATP from ADP in the presence of a proton or sodium gradient. F-type ATPases consist of two structural domains, F(1) containing the extramembraneous catalytic core and F(0) containing the membrane proton channel, linked together by a central stalk and a peripheral stalk. During catalysis, ATP synthesis in the catalytic domain of F(1) is coupled via a rotary mechanism of the central stalk subunits to proton translocation. In terms of biological role, this protein is part of the stalk that links CF(0) to CF(1). It either transmits conformational changes from CF(0) to CF(1) or is implicated in proton conduction. This is ATP synthase subunit delta 2 from Syntrophotalea carbinolica (strain DSM 2380 / NBRC 103641 / GraBd1) (Pelobacter carbinolicus).